The following is a 192-amino-acid chain: Sarcoplasmic calcium-binding protein 1 (192 aa).

The residue at position 1 (A1) is an N-acetylalanine. 4 EF-hand domains span residues 4–39 (WDNR…NTLI), 56–91 (IMSN…VCVG), 100–135 (AFKV…RSAF), and 136–171 (ANIK…YAQF). Residues D17, D19, N21, D28, D69, N71, D73, E75, E80, D113, N115, D117, and E124 each contribute to the Ca(2+) site.

SCPs from crayfish, lobster, and shrimp are polymorphic dimers.

Its function is as follows. Like parvalbumins, SCPs seem to be more abundant in fast contracting muscles, but no functional relationship can be established from this distribution. This chain is Sarcoplasmic calcium-binding protein 1, found in Astacus leptodactylus (Turkish narrow-clawed crayfish).